The sequence spans 448 residues: Methionine aminopeptidase 2 (448 aa).

The segment covering 1 to 17 (MPATAEAADAATQATDA) has biased composition (low complexity). The disordered stretch occupies residues 1–87 (MPATAEAADA…QTEPPSIGLT (87 aa)). Positions 21 to 34 (KLEENKLPEGQERG) are enriched in basic and acidic residues. Over residues 35–46 (PEEEEDDDDDET) the composition is skewed to acidic residues. Positions 55–71 (KKKKKKKSGAKKKKSKT) are enriched in basic residues. His200 provides a ligand contact to substrate. 3 residues coordinate a divalent metal cation: Asp220, Asp231, and His300. Residue His308 participates in substrate binding. Positions 334 and 429 each coordinate a divalent metal cation.

The protein belongs to the peptidase M24A family. Methionine aminopeptidase eukaryotic type 2 subfamily. Co(2+) is required as a cofactor. Zn(2+) serves as cofactor. It depends on Mn(2+) as a cofactor. Requires Fe(2+) as cofactor.

The protein resides in the cytoplasm. It carries out the reaction Release of N-terminal amino acids, preferentially methionine, from peptides and arylamides.. Cotranslationally removes the N-terminal methionine from nascent proteins. The N-terminal methionine is often cleaved when the second residue in the primary sequence is small and uncharged (Met-Ala-, Cys, Gly, Pro, Ser, Thr, or Val). This chain is Methionine aminopeptidase 2, found in Malassezia globosa (strain ATCC MYA-4612 / CBS 7966) (Dandruff-associated fungus).